The chain runs to 477 residues: Methylenetetrahydrofolate--tRNA-(uracil-5-)-methyltransferase TrmFO (477 aa).

15-20 (GAGLAG) lines the FAD pocket.

It belongs to the MnmG family. TrmFO subfamily. FAD is required as a cofactor.

Its subcellular location is the cytoplasm. The catalysed reaction is uridine(54) in tRNA + (6R)-5,10-methylene-5,6,7,8-tetrahydrofolate + NADH + H(+) = 5-methyluridine(54) in tRNA + (6S)-5,6,7,8-tetrahydrofolate + NAD(+). The enzyme catalyses uridine(54) in tRNA + (6R)-5,10-methylene-5,6,7,8-tetrahydrofolate + NADPH + H(+) = 5-methyluridine(54) in tRNA + (6S)-5,6,7,8-tetrahydrofolate + NADP(+). Its function is as follows. Catalyzes the folate-dependent formation of 5-methyl-uridine at position 54 (M-5-U54) in all tRNAs. The sequence is that of Methylenetetrahydrofolate--tRNA-(uracil-5-)-methyltransferase TrmFO from Nitrobacter winogradskyi (strain ATCC 25391 / DSM 10237 / CIP 104748 / NCIMB 11846 / Nb-255).